A 223-amino-acid polypeptide reads, in one-letter code: Putative germin-like protein 2-3 (223 aa).

A signal peptide spans 1–28; the sequence is MAAIRASFLLAAAALLALWCSDHGGVVA. A disulfide bridge links Cys38 with Cys53. Positions 67-217 constitute a Cupin type-1 domain; sequence SGLHMAGNTT…AFQVEKTVVD (151 aa). An N-linked (GlcNAc...) asparagine glycan is attached at Asn74. Mn(2+) contacts are provided by His115, His117, Glu122, and His163.

It belongs to the germin family. Oligomer (believed to be a pentamer but probably hexamer).

Its subcellular location is the secreted. The protein localises to the extracellular space. It is found in the apoplast. Functionally, may play a role in plant defense. Probably has no oxalate oxidase activity even if the active site is conserved. The sequence is that of Putative germin-like protein 2-3 from Oryza sativa subsp. japonica (Rice).